The primary structure comprises 285 residues: MMEAIKKKMQMLKLDKENVLDRAEQAEAEQKQAEERSKQLEDELATMQKKLKGTEDELDKYSEALKDAQEKLELAEKKAADAEAEVASLNRRIQLVEEELDRAQERLATALQKLEEAEKAADESERGMKVIENRALKDEEKMELQEIQLKEAKHIAEEADRKYEEVARKLVIIEGDLERTEERAELAESKCSELEEELKNVTNNLKSLEAQAEKYSQKEDKYEEEIKILTDKLKEAETRAEFAERSVAKLEKTIDDLEDELYAQKLKYKAISDELDHALNDMTSI.

Residues 1–285 (MMEAIKKKMQ…DHALNDMTSI (285 aa)) adopt a coiled-coil conformation. The residue at position 2 (Met2) is an N-acetylmethionine. Met2 carries the post-translational modification N-acetylalanine. Phosphothreonine is present on Thr54. Ser62 and Ser88 each carry phosphoserine. At Thr109 the chain carries Phosphothreonine. Phosphoserine is present on residues Ser207 and Ser216. Ile228 carries the post-translational modification N6-acetyllysine. Thr253 carries the post-translational modification Phosphothreonine. At Tyr262 the chain carries Phosphotyrosine. Ser272 is modified (phosphoserine). The residue at position 283 (Thr283) is a Phosphothreonine. Ser284 bears the Phosphoserine mark.

It belongs to the tropomyosin family. In terms of assembly, homodimer. Heterodimer of an alpha (TPM1, TPM3 or TPM4) and a beta (TPM2) chain. Interacts with TMOD1. Interacts with TNNT1.

It localises to the cytoplasm. The protein localises to the cytoskeleton. Functionally, binds to actin filaments in muscle and non-muscle cells. Plays a central role, in association with the troponin complex, in the calcium dependent regulation of vertebrate striated muscle contraction. Smooth muscle contraction is regulated by interaction with caldesmon. In non-muscle cells is implicated in stabilizing cytoskeleton actin filaments. The protein is Tropomyosin alpha-3 chain (Tpm3) of Mus musculus (Mouse).